Reading from the N-terminus, the 736-residue chain is Factor of DNA methylation 4 (736 aa).

2 stretches are compositionally biased toward basic and acidic residues: residues Arg80–Arg90 and Asp144–Asp167. Positions Arg80 to Asp167 are disordered. A coiled-coil region spans residues Thr360 to Ala597.

In terms of biological role, acts in association with FDM3 and FDM5 for RNA-directed DNA methylation (RdDM). The sequence is that of Factor of DNA methylation 4 from Arabidopsis thaliana (Mouse-ear cress).